Here is a 521-residue protein sequence, read N- to C-terminus: Glucose-6-phosphate isomerase (521 aa).

The active-site Proton donor is the Glu-327. Active-site residues include His-358 and Lys-486.

It belongs to the GPI family.

The protein resides in the cytoplasm. The enzyme catalyses alpha-D-glucose 6-phosphate = beta-D-fructose 6-phosphate. The protein operates within carbohydrate biosynthesis; gluconeogenesis. It participates in carbohydrate degradation; glycolysis; D-glyceraldehyde 3-phosphate and glycerone phosphate from D-glucose: step 2/4. Its function is as follows. Catalyzes the reversible isomerization of glucose-6-phosphate to fructose-6-phosphate. The chain is Glucose-6-phosphate isomerase from Bordetella bronchiseptica (strain ATCC BAA-588 / NCTC 13252 / RB50) (Alcaligenes bronchisepticus).